Here is a 276-residue protein sequence, read N- to C-terminus: C-type lectin domain family 12 member B (276 aa).

Residues 1 to 43 (MSEEVTYATLTFQDSAGARNNRDGNNLRKRGHPAPSPIWRHAA) lie on the Cytoplasmic side of the membrane. The short motif at 5-10 (VTYATL) is the ITIM motif element. The residue at position 7 (Tyr-7) is a Phosphotyrosine. A helical; Signal-anchor for type II membrane protein membrane pass occupies residues 44–64 (LGLVTLCLMLLIGLVTLGMMF). Residues 65-276 (LQISNDINSD…AAPVKTEDLD (212 aa)) lie on the Extracellular side of the membrane. N-linked (GlcNAc...) asparagine glycans are attached at residues Asn-91, Asn-176, and Asn-237. One can recognise a C-type lectin domain in the interval 150–264 (YQNSCYYFTT…CSAEIFWICE (115 aa)). 2 cysteine pairs are disulfide-bonded: Cys-172-Cys-263 and Cys-242-Cys-255.

In terms of assembly, homodimer. Interacts (via ITIM motif) with PTPN6. Interacts (via ITIM motif) with PTPN11; this interaction triggers dephosphorylation and activation of PTPN11. Post-translationally, N-glycosylated. Detected in colon, heart, kidney, liver, lung, mammary gland, ovary, spleen and testis. Expressed in melanocytes (at protein level).

The protein localises to the cell membrane. Inhibitory receptor postulated to negatively regulate immune and non-immune functions. Upon phosphorylation, recruits SH2 domain-containing PTPN6 and PTPN11 phosphatases to its ITIM motif and antagonizes activation signals. Although it inhibits KLRK1/NKG2D-mediated signaling, it does not bind known ligands of KLRK1/NKG2D and therefore is not its inhibitory counterpart. May limit activation of myeloid cell subsets in response to infection or tissue inflammation. May protect target cells against natural killer cell-mediated lysis. May negatively regulate cell cycle and differentiation of melanocytes via inactivation of STAT3. This chain is C-type lectin domain family 12 member B, found in Homo sapiens (Human).